Consider the following 414-residue polypeptide: Adenylosuccinate synthetase (414 aa).

GTP is bound by residues 12–18 and 40–42; these read GDEGKGK and GHT. The Proton acceptor role is filled by D13. Mg(2+) is bound by residues D13 and G40. Residues 13-16, 38-41, T124, R138, Q216, T231, and R297 each bind IMP; these read DEGK and NAGH. H41 serves as the catalytic Proton donor. 293 to 299 is a binding site for substrate; it reads STTGRPR. Residues R299, 325 to 327, and 403 to 405 contribute to the GTP site; these read KLD and STG.

The protein belongs to the adenylosuccinate synthetase family. In terms of assembly, homodimer. Mg(2+) is required as a cofactor.

The protein resides in the cytoplasm. It carries out the reaction IMP + L-aspartate + GTP = N(6)-(1,2-dicarboxyethyl)-AMP + GDP + phosphate + 2 H(+). It participates in purine metabolism; AMP biosynthesis via de novo pathway; AMP from IMP: step 1/2. Functionally, plays an important role in the de novo pathway of purine nucleotide biosynthesis. Catalyzes the first committed step in the biosynthesis of AMP from IMP. The sequence is that of Adenylosuccinate synthetase from Hydrogenobaculum sp. (strain Y04AAS1).